Here is a 122-residue protein sequence, read N- to C-terminus: Cysteine proteinase inhibitor 5 (122 aa).

A signal peptide spans 1-26 (MTSKVVFLLLLSLVVVLLPLYASAAA). Residues 29–117 (GGWSPISNVT…RNLTSFEPAN (89 aa)) form the Cystatin domain. N-linked (GlcNAc...) asparagine glycosylation occurs at N36. The Secondary area of contact signature appears at 72-76 (QVVSG). N-linked (GlcNAc...) asparagine glycosylation occurs at N109.

Belongs to the cystatin family. Phytocystatin subfamily.

Its subcellular location is the secreted. Functionally, specific inhibitor of cysteine proteinases. Probably involved in the regulation of endogenous processes and in defense against pests and pathogens. The sequence is that of Cysteine proteinase inhibitor 5 (CYS5) from Arabidopsis thaliana (Mouse-ear cress).